The primary structure comprises 59 residues: MAKLQITLTRSVIGRPETQRKTVEALGLKKTNSSVVVEDNPAIRGQINKVKHLLTIEEK.

This sequence belongs to the universal ribosomal protein uL30 family. As to quaternary structure, part of the 50S ribosomal subunit.

This Staphylococcus epidermidis (strain ATCC 12228 / FDA PCI 1200) protein is Large ribosomal subunit protein uL30.